Here is a 160-residue protein sequence, read N- to C-terminus: uncharacterized protein (160 aa).

An N-acetyltransferase domain is found at leucine 9–glutamate 151.

This is an uncharacterized protein from Oceanobacillus iheyensis (strain DSM 14371 / CIP 107618 / JCM 11309 / KCTC 3954 / HTE831).